Here is a 104-residue protein sequence, read N- to C-terminus: Small ribosomal subunit protein bS18c (104 aa).

The disordered stretch occupies residues 84 to 104 (DKQFERSESTPRTIGLRTRNK).

Belongs to the bacterial ribosomal protein bS18 family. As to quaternary structure, part of the 30S ribosomal subunit.

The protein localises to the plastid. Its subcellular location is the chloroplast. The chain is Small ribosomal subunit protein bS18c from Cucumis sativus (Cucumber).